Reading from the N-terminus, the 259-residue chain is MKHYQAYLIDLDGTMYKGTDEIDGAAQFIDYLNNNHIPHLYVTNNSTKTPVQVTEKLREMHIDAKPDEVVTSALATADYISEQHPNATVYMIGGHGLKTALTDAGLSIKNDEHVDYVVIGLDEKVTYEKLSIATLAVRNGAKFISTNPDVSIPKERGFLPGNGAITSVVSVSTGIQPEFIGKPEPIIMSKSLDILGLEKSEVAMVGDLYDTDIMSGINVGIDTIHVQTGVSTYEDIQSKEIPPTYSFKDLNVAIAELEK.

It belongs to the HAD-like hydrolase superfamily. NagD family. Mg(2+) is required as a cofactor.

Its function is as follows. Catalyzes the dephosphorylation of 2-6 carbon acid sugars in vitro. The chain is Acid sugar phosphatase (nagD) from Staphylococcus epidermidis (strain ATCC 12228 / FDA PCI 1200).